The primary structure comprises 182 residues: tRNA-splicing endonuclease (182 aa).

Catalysis depends on residues tyrosine 119, histidine 127, and lysine 158.

The protein belongs to the tRNA-intron endonuclease family. Archaeal short subfamily. As to quaternary structure, homotetramer; although the tetramer contains four active sites, only two participate in the cleavage. Therefore, it should be considered as a dimer of dimers.

It carries out the reaction pretRNA = a 3'-half-tRNA molecule with a 5'-OH end + a 5'-half-tRNA molecule with a 2',3'-cyclic phosphate end + an intron with a 2',3'-cyclic phosphate and a 5'-hydroxyl terminus.. Endonuclease that removes tRNA introns. Cleaves pre-tRNA at the 5'- and 3'-splice sites to release the intron. The products are an intron and two tRNA half-molecules bearing 2',3' cyclic phosphate and 5'-OH termini. Recognizes a pseudosymmetric substrate in which 2 bulged loops of 3 bases are separated by a stem of 4 bp. The sequence is that of tRNA-splicing endonuclease from Saccharolobus solfataricus (strain ATCC 35092 / DSM 1617 / JCM 11322 / P2) (Sulfolobus solfataricus).